Consider the following 257-residue polypeptide: Protein windbeutel (257 aa).

A signal peptide spans 1–21; it reads MMHILVTLLLVAIHSIPTTWA. Residues 24–27 form a CXXC motif region; the sequence is CTGC. Positions 254 to 257 match the Prevents secretion from ER motif; the sequence is KEEL.

In terms of assembly, homodimer. Interacts with pip; the interaction is direct and does not require pip to be folded. Briefly expressed in the follicle cells of the ovary, at around the time when the dorsoventral axis of the egg chamber is first established.

It is found in the endoplasmic reticulum lumen. Functionally, probable chaperone protein involved in dorsoventral axis patterning in early embryos. Probably acts by folding and targeting pipe (pip) into the Golgi. This is Protein windbeutel from Drosophila melanogaster (Fruit fly).